A 257-amino-acid chain; its full sequence is Imidazole glycerol phosphate synthase subunit HisF (257 aa).

Residues aspartate 11 and aspartate 130 contribute to the active site.

The protein belongs to the HisA/HisF family. Heterodimer of HisH and HisF.

It is found in the cytoplasm. The enzyme catalyses 5-[(5-phospho-1-deoxy-D-ribulos-1-ylimino)methylamino]-1-(5-phospho-beta-D-ribosyl)imidazole-4-carboxamide + L-glutamine = D-erythro-1-(imidazol-4-yl)glycerol 3-phosphate + 5-amino-1-(5-phospho-beta-D-ribosyl)imidazole-4-carboxamide + L-glutamate + H(+). Its pathway is amino-acid biosynthesis; L-histidine biosynthesis; L-histidine from 5-phospho-alpha-D-ribose 1-diphosphate: step 5/9. Its function is as follows. IGPS catalyzes the conversion of PRFAR and glutamine to IGP, AICAR and glutamate. The HisF subunit catalyzes the cyclization activity that produces IGP and AICAR from PRFAR using the ammonia provided by the HisH subunit. In Actinobacillus succinogenes (strain ATCC 55618 / DSM 22257 / CCUG 43843 / 130Z), this protein is Imidazole glycerol phosphate synthase subunit HisF.